The sequence spans 334 residues: Galactosylgalactosylxylosylprotein 3-beta-glucuronosyltransferase 1 (334 aa).

The Cytoplasmic segment spans residues M1–D6. The tract at residues K3 to R5 is essential for transport from endoplasmic reticulum to Golgi apparatus and interaction with SAR1A. Residues I7–S27 traverse the membrane as a helical; Signal-anchor for type II membrane protein segment. Over S28–I334 the chain is Lumenal. Residue P91–Y93 participates in UDP-alpha-D-glucuronate binding. Residues T103 and T108 each carry the phosphothreonine modification. D122 contacts UDP-alpha-D-glucuronate. N-linked (GlcNAc...) asparagine glycosylation occurs at N140. The UDP-alpha-D-glucuronate site is built by R165 and R170. N-linked (GlcNAc...) asparagine glycosylation is present at N184. D195–D197 is a binding site for UDP-alpha-D-glucuronate. D197 provides a ligand contact to Mn(2+). The segment at F245–D254 is interaction with galactose moiety of substrate glycoprotein. The active-site Proton donor/acceptor is E284. A glycan (N-linked (GlcNAc...) asparagine) is linked at N303. H311–R313 contributes to the UDP-alpha-D-glucuronate binding site.

This sequence belongs to the glycosyltransferase 43 family. As to quaternary structure, homodimer. Interacts with SAR1A. Mn(2+) serves as cofactor. In terms of processing, the soluble form derives from the membrane form by proteolytic processing.

The protein localises to the golgi apparatus membrane. It localises to the secreted. Its subcellular location is the endoplasmic reticulum membrane. The enzyme catalyses 3-O-(beta-D-galactosyl-(1-&gt;3)-beta-D-galactosyl-(1-&gt;4)-beta-D-xylosyl)-L-seryl-[protein] + UDP-alpha-D-glucuronate = 3-O-(beta-D-GlcA-(1-&gt;3)-beta-D-Gal-(1-&gt;3)-beta-D-Gal-(1-&gt;4)-beta-D-Xyl)-L-seryl-[protein] + UDP + H(+). The protein operates within protein modification; protein glycosylation. In terms of biological role, involved in the biosynthesis of L2/HNK-1 carbohydrate epitope on glycoproteins. Can also play a role in glycosaminoglycan biosynthesis. Substrates include asialo-orosomucoid (ASOR), asialo-fetuin, and asialo-neural cell adhesion molecule. Requires sphingomyelin for activity: stearoyl-sphingomyelin was the most effective, followed by palmitoyl-sphingomyelin and lignoceroyl-sphingomyelin. Activity was demonstrated only for sphingomyelin with a saturated fatty acid and not for that with an unsaturated fatty acid, regardless of the length of the acyl group. The chain is Galactosylgalactosylxylosylprotein 3-beta-glucuronosyltransferase 1 from Mus musculus (Mouse).